Reading from the N-terminus, the 156-residue chain is ATP synthase subunit b (156 aa).

Residues 7-27 (LFAQMIVFFVLWWVVARFVWP) traverse the membrane as a helical segment.

Belongs to the ATPase B chain family. In terms of assembly, F-type ATPases have 2 components, F(1) - the catalytic core - and F(0) - the membrane proton channel. F(1) has five subunits: alpha(3), beta(3), gamma(1), delta(1), epsilon(1). F(0) has three main subunits: a(1), b(2) and c(10-14). The alpha and beta chains form an alternating ring which encloses part of the gamma chain. F(1) is attached to F(0) by a central stalk formed by the gamma and epsilon chains, while a peripheral stalk is formed by the delta and b chains.

The protein resides in the cell inner membrane. F(1)F(0) ATP synthase produces ATP from ADP in the presence of a proton or sodium gradient. F-type ATPases consist of two structural domains, F(1) containing the extramembraneous catalytic core and F(0) containing the membrane proton channel, linked together by a central stalk and a peripheral stalk. During catalysis, ATP synthesis in the catalytic domain of F(1) is coupled via a rotary mechanism of the central stalk subunits to proton translocation. Functionally, component of the F(0) channel, it forms part of the peripheral stalk, linking F(1) to F(0). This is ATP synthase subunit b from Polynucleobacter necessarius subsp. necessarius (strain STIR1).